The primary structure comprises 650 residues: A-kinase anchor protein 10, mitochondrial (650 aa).

The transit peptide at R1–R16 directs the protein to the mitochondrion. Disordered regions lie at residues R1–T45 and S168–D192. The residue at position 40 (S40) is a Phosphoserine. 2 consecutive RGS domains span residues T113–Q356 and Y366–L493. Position 268 is a phosphoserine (S268). The disordered stretch occupies residues L512 to Q535. The segment covering L525–Q535 has biased composition (low complexity). The PKA-RII subunit binding stretch occupies residues L622–M635.

Its subcellular location is the mitochondrion. The protein localises to the membrane. The protein resides in the cytoplasm. Functionally, differentially targeted protein that binds to type I and II regulatory subunits of protein kinase A and anchors them to the mitochondria or the plasma membrane. Although the physiological relevance between PKA and AKAPS with mitochondria is not fully understood, one idea is that BAD, a proapoptotic member, is phosphorylated and inactivated by mitochondria-anchored PKA. It cannot be excluded too that it may facilitate PKA as well as G protein signal transduction, by acting as an adapter for assembling multiprotein complexes. With its RGS domain, it could lead to the interaction to G-alpha proteins, providing a link between the signaling machinery and the downstream kinase. The chain is A-kinase anchor protein 10, mitochondrial (AKAP10) from Sus scrofa (Pig).